The primary structure comprises 128 residues: 3-aminoacrylate deaminase RutC (128 aa).

This sequence belongs to the RutC family.

The enzyme catalyses (Z)-3-aminoacrylate + H2O + H(+) = 3-oxopropanoate + NH4(+). Functionally, involved in pyrimidine catabolism. Catalyzes the deamination of 3-aminoacrylate to malonic semialdehyde, a reaction that can also occur spontaneously. RutC may facilitate the reaction and modulate the metabolic fitness, rather than catalyzing essential functions. The protein is 3-aminoacrylate deaminase RutC of Agrobacterium fabrum (strain C58 / ATCC 33970) (Agrobacterium tumefaciens (strain C58)).